The primary structure comprises 709 residues: MKLFLLFTLTLVNIFSVSLQEPIQNQPAGNNTITSPHRNVWRALSEAEFSGVSAVLVHQLNLTTSRGGNRIIQIDYLYPNKSDVLLFLDHNGEEPKRYARATVQFGSPEVPYLQEYRIGPLPATNTTAVEPLRFPFNGKVQGKTKITSLDADGIDAFLPQLSSVVEDITRKLWNTTLAEGGVSFNLGKASFNSDSTQTIWLGFLNNATTGFDSSTLLPLGVSMQLDITSRDYNDWFVLYWFYNNKLYTPTSFNETVYSSDFQPPLANIDGPWTSTNKQEPTFLLDDLPPPKAISRGKNRYNLDTEENYVQWMDFSFYFSSHTDRGLSLFNVVYKSKRIIYELSLQEALAHYAGVEPVPSEAVYFDTQTGMGRSMISLIKGYDCPDYATYLNSSFSSRTGVTITPDAICLFESDSQFPLRRHTSQAFGYASAARNVVFTVRWIATVGNYDYLFDYDFFYDGAIEVKVRASGYIQGAYYAGNEEYGFKIHDALSGSMHDHVMTFKADLDIYGEKNSVQKVEVVPETTIYPWSQGQPHNTMKLNRGFVTSETDSSIDWAADDAISYTIVNKDSPNKYGEYPGYRFRRVAPAIHLTVKNSTSGGKALHYATHDLFITQQKDNEPCAADRNNAYNIDDPLVDFEKFLDGESLEQEDLVLWINMGMHHTPHTEDLPNTIMTSAYSGIRFEPFNYLESGDPSVKSAQQARIILSNS.

An N-terminal signal peptide occupies residues 1–20 (MKLFLLFTLTLVNIFSVSLQ). D365 (proton acceptor) is an active-site residue. The cysteines at positions 383 and 408 are disulfide-linked. The active-site Schiff-base intermediate with substrate; via topaquinone is Y448. A 2',4',5'-topaquinone modification is found at Y448. The Cu cation site is built by H496 and H498. Ca(2+) is bound by residues D505, L506, D507, E548, F641, E645, D651, and L652. A Cu cation-binding site is contributed by H662.

Belongs to the copper/topaquinone oxidase family. In terms of assembly, homodimer; disulfide-linked. Cu cation is required as a cofactor. It depends on Ca(2+) as a cofactor. Requires L-topaquinone as cofactor. In terms of processing, topaquinone (TPQ) is generated by copper-dependent autoxidation of a specific tyrosyl residue.

Its pathway is mycotoxin biosynthesis. In terms of biological role, copper amine oxidase, part of the gene cluster that mediates the biosynthesis of the secondary metabolite victorin, the molecular basis for Victoria blight of oats. Within the pathway, vicK1 catalyzes the oxidative deamination of the N-terminal glycyl moiety of the hexapeptides in order to produce the active glyoxylate form victorins. The pathway starts with the processing of the precursor vicA1 by several endopeptidases including kexin proteases as well as the cluster-specific S28 family peptidases vicPa and vicPb to produce 7 identical copies of the hexapeptide Gly-Leu-Lys-Leu-Ala-Phe. After being excised from the precursor peptide, the core peptides are cyclized and modified post-translationally by enzymes encoded within the gene cluster. The ustYa family oxidase vicYb is required for the formation of the macrocycle in victorin and the copper amine oxidases (CAOs) vicK1 and vicK2 are responsible for converting victorin to the active form by oxidizing the N-terminal glycyl residue in the peptides to glyoxylate. Relaxed substrate specificity of enzymes in the victorin biosynthetic pathway results in a metabolic grid that produces a set of analogs including victorinines B, C, E or HV-toxin M. The chain is Copper amine oxidase vicK1 from Bipolaris victoriae (strain FI3) (Victoria blight of oats agent).